Reading from the N-terminus, the 78-residue chain is Large ribosomal subunit protein bL28 (78 aa).

The tract at residues 1–20 is disordered; it reads MSRVCQVTGKGPVTGNNISH.

It belongs to the bacterial ribosomal protein bL28 family.

This is Large ribosomal subunit protein bL28 from Pseudomonas putida (strain ATCC 700007 / DSM 6899 / JCM 31910 / BCRC 17059 / LMG 24140 / F1).